A 279-amino-acid chain; its full sequence is uncharacterized protein (279 aa).

Low complexity-rich tracts occupy residues 1–25, 86–151, and 232–250; these read MNEN…NNNN, PSQS…NGNN, and NKNN…DDNN. Disordered stretches follow at residues 1-27, 83-153, and 213-260; these read MNEN…NNIK, NLFP…NNID, and QSVN…KVKS.

This is an uncharacterized protein from Dictyostelium discoideum (Social amoeba).